The primary structure comprises 704 residues: Elongation factor G (704 aa).

The tr-type G domain occupies 10–290 (TKVRNIGIMA…AVVDYLPSPL (281 aa)). Residues 19–26 (AHIDAGKT), 83–87 (DTPGH), and 137–140 (NKMD) contribute to the GTP site.

This sequence belongs to the TRAFAC class translation factor GTPase superfamily. Classic translation factor GTPase family. EF-G/EF-2 subfamily.

It localises to the cytoplasm. Its function is as follows. Catalyzes the GTP-dependent ribosomal translocation step during translation elongation. During this step, the ribosome changes from the pre-translocational (PRE) to the post-translocational (POST) state as the newly formed A-site-bound peptidyl-tRNA and P-site-bound deacylated tRNA move to the P and E sites, respectively. Catalyzes the coordinated movement of the two tRNA molecules, the mRNA and conformational changes in the ribosome. The protein is Elongation factor G of Beutenbergia cavernae (strain ATCC BAA-8 / DSM 12333 / CCUG 43141 / JCM 11478 / NBRC 16432 / NCIMB 13614 / HKI 0122).